A 162-amino-acid polypeptide reads, in one-letter code: Succinate dehydrogenase assembly factor 2-A, mitochondrial (162 aa).

It belongs to the SDHAF2 family. In terms of assembly, interacts with the flavoprotein subunit within the SDH catalytic dimer.

It is found in the mitochondrion matrix. Plays an essential role in the assembly of succinate dehydrogenase (SDH), an enzyme complex (also referred to as respiratory complex II) that is a component of both the tricarboxylic acid (TCA) cycle and the mitochondrial electron transport chain, and which couples the oxidation of succinate to fumarate with the reduction of ubiquinone (coenzyme Q) to ubiquinol. Required for flavinylation (covalent attachment of FAD) of the flavoprotein subunit of the SDH catalytic dimer. This is Succinate dehydrogenase assembly factor 2-A, mitochondrial from Drosophila yakuba (Fruit fly).